The chain runs to 1018 residues: Thrombospondin type-1 domain-containing protein 4 (1018 aa).

A signal peptide spans 1–26 (MVSYLTSCLSALSTLLLLLGSQLVCP). 3 disordered regions span residues 34-56 (KVPQRMAVTEGTPEDSGSGSPGV), 116-240 (HRSQ…PSEA), and 534-623 (SPQV…NWKQ). Residues 54–307 (PGVWGSWGPW…YKLCNTNACP (254 aa)) form the TSP type-1 1 domain. Residues 187–199 (QRLRRQRPSSRHS) show a composition bias toward basic residues. A compositionally biased stretch (polar residues) spans 216–230 (HQFSHSQPLYQSDSG). Basic and acidic residues-rich tracts occupy residues 558 to 573 (QEDREEREKNQEKEDS) and 592 to 603 (RHPERFPSHRPD). TSP type-1 domains follow at residues 676–737 (CPAF…KICS), 739–792 (WQIR…DMGP), 793–851 (CAKS…GPCT), 852–911 (GKVE…HLKP), and 912–968 (CGAK…QDCV). In terms of domain architecture, PLAC spans 971–1008 (VDENCKDKYYNCNVVVQARLCVYNYYKTACCASCTRVA).

In terms of assembly, isoform 2 interacts with FBN1. Isoform 2 may interact with TGFB1. Both isoforms are expressed in the embryo from 7 dpc through 17. Isoform 1 is widely expressed in adult tissues. Isoform 2 is detected in brain, spinal cord, eye, kidney, stomach and uterus. Mainly observed in fibrillar extracellular matrices in elastic tissues (at protein level).

The protein resides in the secreted. It is found in the extracellular space. It localises to the extracellular matrix. Functionally, promotes FBN1 matrix assembly. Attenuates TGFB signaling, possibly by accelerating the sequestration of large latent complexes of TGFB or active TGFB by FBN1 microfibril assembly, thereby negatively regulating the expression of TGFB regulatory targets, such as POSTN. This is Thrombospondin type-1 domain-containing protein 4 (Thsd4) from Mus musculus (Mouse).